A 476-amino-acid chain; its full sequence is MSTIKKLYIKTWGCQMNEYDSSKMADLLESTHGYQLTDVAEEADILLLNTCSIREKAQEKVFHQLGRWKNLKDTNPDLIIGVGGCVASQEGDFIRQRAQCVDIIFGPQTLHRLPEMINQVKGTRSPVVDISFPEIEKFDRLPEPRAEGPSAFVSIMEGCNKYCTFCVVPYTRGEEVSRPCDDVLFEIAQLAAQGVREVNLLGQNVNAYRGATYDGDICSFAELIRLVAAIDGIDRIRFTTSHPIEFTDDIIAVYEDTPELVSFLHLPVQSGSDRILTLMKRAHTALEYKSIIRKLRKARPDILISSDFIIGFPGETQDDFEKTMKLIADVNFDMSYSFIYSARPGTPAADLPDDVSEEEKKQRLYLLQQRINQQAMSYSRAMLGSVQRILVEGTSRKNVMELSGRTENNRVVNFEGQPDMIGKFVDVEIVDVYANSLRGKVIRTEDQMDLRIHESPESVIARTRKEDEIGVGTYQP.

Positions Lys-5 to Gly-122 constitute an MTTase N-terminal domain. Residues Cys-14, Cys-51, Cys-85, Cys-159, Cys-163, and Cys-166 each coordinate [4Fe-4S] cluster. Residues Arg-145–Ser-377 form the Radical SAM core domain. Residues Arg-380–Arg-443 enclose the TRAM domain.

Belongs to the methylthiotransferase family. MiaB subfamily. In terms of assembly, monomer. The cofactor is [4Fe-4S] cluster.

The protein resides in the cytoplasm. The catalysed reaction is N(6)-dimethylallyladenosine(37) in tRNA + (sulfur carrier)-SH + AH2 + 2 S-adenosyl-L-methionine = 2-methylsulfanyl-N(6)-dimethylallyladenosine(37) in tRNA + (sulfur carrier)-H + 5'-deoxyadenosine + L-methionine + A + S-adenosyl-L-homocysteine + 2 H(+). Its function is as follows. Catalyzes the methylthiolation of N6-(dimethylallyl)adenosine (i(6)A), leading to the formation of 2-methylthio-N6-(dimethylallyl)adenosine (ms(2)i(6)A) at position 37 in tRNAs that read codons beginning with uridine. The chain is tRNA-2-methylthio-N(6)-dimethylallyladenosine synthase from Photorhabdus laumondii subsp. laumondii (strain DSM 15139 / CIP 105565 / TT01) (Photorhabdus luminescens subsp. laumondii).